Reading from the N-terminus, the 423-residue chain is Putative competence-damage inducible protein (423 aa).

This sequence belongs to the CinA family.

In Streptococcus equi subsp. zooepidemicus (strain H70), this protein is Putative competence-damage inducible protein.